Reading from the N-terminus, the 239-residue chain is MKVTKKDMIYEGKGKKMWSVAEDENLLIAEFKDDLTAFNGIKKSSEKGKGALNNKISTQLFHLLEKNGIKTDLVETINDTEQVVKKVKIFPLEVIARNIATGSLTKRLGIKDGTVLPFTLVEFCYKDDDLGDPILNDDHALLLGAVKDKNELENLRQTAIKINKILKEFFATKNLKLVDFKIELGKDKDGNILLADEISPDSCRFWDAKTNEKLDKDRFRQSIGNVKVAYEEVLRRILS.

This sequence belongs to the SAICAR synthetase family.

It carries out the reaction 5-amino-1-(5-phospho-D-ribosyl)imidazole-4-carboxylate + L-aspartate + ATP = (2S)-2-[5-amino-1-(5-phospho-beta-D-ribosyl)imidazole-4-carboxamido]succinate + ADP + phosphate + 2 H(+). It participates in purine metabolism; IMP biosynthesis via de novo pathway; 5-amino-1-(5-phospho-D-ribosyl)imidazole-4-carboxamide from 5-amino-1-(5-phospho-D-ribosyl)imidazole-4-carboxylate: step 1/2. This is Phosphoribosylaminoimidazole-succinocarboxamide synthase from Campylobacter hominis (strain ATCC BAA-381 / DSM 21671 / CCUG 45161 / LMG 19568 / NCTC 13146 / CH001A).